The following is a 238-amino-acid chain: Tetraspanin-4 (238 aa).

The Cytoplasmic portion of the chain corresponds to 1-13; that stretch reads MARGCLQGVKYLM. A helical transmembrane segment spans residues 14–34; sequence FAFNLLFWLGGCGVLGVGIWL. Over 35-55 the chain is Extracellular; it reads AATQGNFATLSSSFPSLSAAN. Residues 56-76 form a helical membrane-spanning segment; that stretch reads LLIVTGTFVMAIGFVGCIGAL. Residues 77 to 85 are Cytoplasmic-facing; it reads KENKCLLLT. Residues 86–106 form a helical membrane-spanning segment; sequence FFVLLLLVFLLEATIAVLFFA. The Extracellular segment spans residues 107–201; it reads YSDKIDSYAQ…ETVKAWLQEN (95 aa). N-linked (GlcNAc...) asparagine glycosylation is found at N152 and N161. The helical transmembrane segment at 202 to 222 threads the bilayer; the sequence is LLAVGIFGLCTALVQILGLTF. Topologically, residues 223 to 238 are cytoplasmic; that stretch reads AMTMYCQVVKADTYCA.

The protein belongs to the tetraspanin (TM4SF) family. Forms a complex with integrins.

Its subcellular location is the membrane. This is Tetraspanin-4 (Tspan4) from Mus musculus (Mouse).